A 118-amino-acid polypeptide reads, in one-letter code: Large ribosomal subunit protein bL17 (118 aa).

Belongs to the bacterial ribosomal protein bL17 family. Part of the 50S ribosomal subunit. Contacts protein L32.

The polypeptide is Large ribosomal subunit protein bL17 (Aster yellows witches'-broom phytoplasma (strain AYWB)).